Consider the following 735-residue polypeptide: Diacylglycerol kinase alpha (735 aa).

EF-hand domains are found at residues 110–145 (RPEDKLEFTFKLYDTDRNGILDSSEVDKIILQMMRV) and 155–190 (ELRPILQEMMKEIDYDGSGSVSQAEWVRAGATTVPL). Residues aspartate 123, aspartate 125, asparagine 127, glutamate 134, aspartate 168, aspartate 170, serine 172, serine 174, and glutamate 179 each coordinate Ca(2+). 2 Phorbol-ester/DAG-type zinc fingers span residues 205–253 (QHMW…ALPC) and 269–319 (SHVW…GHEC). The 135-residue stretch at 372–506 (PNTHPLLVFV…MDRWSVEVIP (135 aa)) folds into the DAGKc domain. Position 484 is an N6-acetyllysine (lysine 484).

Belongs to the eukaryotic diacylglycerol kinase family. As to quaternary structure, monomer. In terms of tissue distribution, expressed in lymphocytes.

The protein resides in the cytoplasm. It is found in the cytosol. It carries out the reaction a 1,2-diacyl-sn-glycerol + ATP = a 1,2-diacyl-sn-glycero-3-phosphate + ADP + H(+). The catalysed reaction is a 1-O-alkyl-sn-glycerol + ATP = a 1-O-alkyl-sn-glycero-3-phosphate + ADP + H(+). It catalyses the reaction 1-O-alkyl-2-acyl-sn-glycerol + ATP = 1-O-alkyl-2-acyl-sn-glycero-3-phosphate + ADP + H(+). The enzyme catalyses 1,2-dihexadecanoyl-sn-glycerol + ATP = 1,2-dihexadecanoyl-sn-glycero-3-phosphate + ADP + H(+). It carries out the reaction 1-hexadecanoyl-2-(9Z-octadecenoyl)-sn-glycerol + ATP = 1-hexadecanoyl-2-(9Z-octadecenoyl)-sn-glycero-3-phosphate + ADP + H(+). The catalysed reaction is 2-(9Z-octadecenoyl)-glycerol + ATP = 2-(9Z-octadecenoyl)-sn-glycero-3-phosphate + ADP + H(+). It catalyses the reaction 1,2-di-(9Z-octadecenoyl)-sn-glycerol + ATP = 1,2-di-(9Z-octadecenoyl)-sn-glycero-3-phosphate + ADP + H(+). The enzyme catalyses 1-octadecanoyl-2-(5Z,8Z,11Z,14Z-eicosatetraenoyl)-sn-glycerol + ATP = 1-octadecanoyl-2-(5Z,8Z,11Z,14Z-eicosatetraenoyl)-sn-glycero-3-phosphate + ADP + H(+). It carries out the reaction 1,2-didecanoyl-sn-glycerol + ATP = 1,2-didecanoyl-sn-glycero-3-phosphate + ADP + H(+). The catalysed reaction is 1-O-hexadecyl-2-acetyl-sn-glycerol + ATP = 1-O-hexadecyl-2-acetyl-sn-glycero-3-phosphate + ADP + H(+). It catalyses the reaction 1-O-hexadecyl-2-(5Z,8Z,11Z,14Z-eicosatetraenoyl)-sn-glycerol + ATP = 1-O-hexadecyl-2-(5Z,8Z,11Z,14Z-eicosatetraenoyl)-sn-glycero-3-phosphate + ADP + H(+). The enzyme catalyses 1-O-hexadecyl-2-(9Z-octadecenoyl)-sn-glycerol + ATP = 1-O-hexadecyl-2-(9Z-octadecenoyl)-sn-glycero-3-phosphate + ADP + H(+). It carries out the reaction 1-O-hexadecyl-sn-glycerol + ATP = 1-O-hexadecyl-sn-glycero-3-phosphate + ADP + H(+). The protein operates within lipid metabolism; glycerolipid metabolism. Its activity is regulated as follows. Stimulated by calcium and phosphatidylserine. Its function is as follows. Diacylglycerol kinase that converts diacylglycerol/DAG into phosphatidic acid/phosphatidate/PA and regulates the respective levels of these two bioactive lipids. Thereby, acts as a central switch between the signaling pathways activated by these second messengers with different cellular targets and opposite effects in numerous biological processes. Also plays an important role in the biosynthesis of complex lipids. Can also phosphorylate 1-alkyl-2-acylglycerol in vitro as efficiently as diacylglycerol provided it contains an arachidonoyl group. Also involved in the production of alkyl-lysophosphatidic acid, another bioactive lipid, through the phosphorylation of 1-alkyl-2-acetyl glycerol. This is Diacylglycerol kinase alpha (DGKA) from Homo sapiens (Human).